The following is a 339-amino-acid chain: uncharacterized protein (339 aa).

Zn(2+)-binding residues include histidine 17, histidine 19, histidine 197, and aspartate 278. Aspartate 279 is a substrate binding site.

This sequence belongs to the metallo-dependent hydrolases superfamily. Adenosine and AMP deaminases family. Adenine deaminase type 2 subfamily. Zn(2+) is required as a cofactor.

It is found in the cytoplasm. It localises to the nucleus. This is an uncharacterized protein from Schizosaccharomyces pombe (strain 972 / ATCC 24843) (Fission yeast).